The sequence spans 214 residues: Triosephosphate isomerase (214 aa).

Residue 6–8 (NLK) coordinates substrate. His85 acts as the Electrophile in catalysis. Glu133 (proton acceptor) is an active-site residue. Substrate contacts are provided by residues Ile138, Gly173, and 194–195 (AS).

Belongs to the triosephosphate isomerase family. Homotetramer; dimer of dimers.

The protein localises to the cytoplasm. The catalysed reaction is D-glyceraldehyde 3-phosphate = dihydroxyacetone phosphate. Its pathway is carbohydrate biosynthesis; gluconeogenesis. It functions in the pathway carbohydrate degradation; glycolysis; D-glyceraldehyde 3-phosphate from glycerone phosphate: step 1/1. Its function is as follows. Involved in the gluconeogenesis. Catalyzes stereospecifically the conversion of dihydroxyacetone phosphate (DHAP) to D-glyceraldehyde-3-phosphate (G3P). This chain is Triosephosphate isomerase, found in Halobacterium salinarum (strain ATCC 700922 / JCM 11081 / NRC-1) (Halobacterium halobium).